The sequence spans 380 residues: Cytochrome b (380 aa).

4 helical membrane passes run 34–54, 78–99, 114–134, and 179–199; these read FGSLLGICLATQILTGLLLAA, WLIRNLHANGASFFFICIYLHI, WNTGVILLLTLMATAFVGYVL, and FFTLHFLLPFMIMGLTLIHLT. Positions 84 and 98 each coordinate heme b. Residues histidine 183 and histidine 197 each contribute to the heme b site. A ubiquinone is bound at residue histidine 202. Helical transmembrane passes span 227 to 247, 289 to 309, 321 to 341, and 348 to 368; these read LKDTLGFMFMLLPLMTLALFS, LGGVLALAASVLILFLAPLLH, LFQLLFWTLTANLLILTWVGS, and FIIIGQLASLTYFTILLILFP.

The protein belongs to the cytochrome b family. The cytochrome bc1 complex contains 11 subunits: 3 respiratory subunits (MT-CYB, CYC1 and UQCRFS1), 2 core proteins (UQCRC1 and UQCRC2) and 6 low-molecular weight proteins (UQCRH/QCR6, UQCRB/QCR7, UQCRQ/QCR8, UQCR10/QCR9, UQCR11/QCR10 and a cleavage product of UQCRFS1). This cytochrome bc1 complex then forms a dimer. Requires heme b as cofactor.

It localises to the mitochondrion inner membrane. Its function is as follows. Component of the ubiquinol-cytochrome c reductase complex (complex III or cytochrome b-c1 complex) that is part of the mitochondrial respiratory chain. The b-c1 complex mediates electron transfer from ubiquinol to cytochrome c. Contributes to the generation of a proton gradient across the mitochondrial membrane that is then used for ATP synthesis. This chain is Cytochrome b (MT-CYB), found in Grus nigricollis (Black-necked crane).